The following is a 399-amino-acid chain: MILNLRVDHKIANIDAMENIAKEMDQLFLELQEKYSIVEYVEISTCNRKEYYIHNDNIDASDSLLSHENKSIIIDYGDSVIKHLFRMTSGLESMIVGEDQILGQVSDAKQKAFKERHCGKILDSIFTKAIHVGRVVRNKTNINKGSISIGSAAVDLAEKHLGNLENKSVLVIGAGKMGKLVAKALAEKNLNAIFVANRTYYVAVELANDLNGHAVLFNELGKYVQTADLIISATGAPHYILNKERLEKTDGDFKDLLMIDIANPRDICEDVCELGVKLFNIDDLREIADENTKLRKKEFAEAENIIDEEFSLLKESFKLIGVEDIIANLRVSMENIRERETEKAIAKLSDVDANAKIIDNLTNSIVNKIFFDISKKIKQAAHENDEELIRAIEFMFEEK.

Residues 45–48, Ser93, 98–100, and Gln104 contribute to the substrate site; these read TCNR and EDQ. Catalysis depends on Cys46, which acts as the Nucleophile. 173 to 178 is a binding site for NADP(+); the sequence is GAGKMG.

It belongs to the glutamyl-tRNA reductase family. Homodimer.

The enzyme catalyses (S)-4-amino-5-oxopentanoate + tRNA(Glu) + NADP(+) = L-glutamyl-tRNA(Glu) + NADPH + H(+). The protein operates within porphyrin-containing compound metabolism; protoporphyrin-IX biosynthesis; 5-aminolevulinate from L-glutamyl-tRNA(Glu): step 1/2. Its function is as follows. Catalyzes the NADPH-dependent reduction of glutamyl-tRNA(Glu) to glutamate 1-semialdehyde (GSA). This Methanobrevibacter smithii (strain ATCC 35061 / DSM 861 / OCM 144 / PS) protein is Glutamyl-tRNA reductase.